A 95-amino-acid polypeptide reads, in one-letter code: Small ubiquitin-related modifier 2-A (95 aa).

K11 participates in a covalent cross-link: Glycyl lysine isopeptide (Lys-Gly) (interchain with G-Cter in SUMO). Residues 16–95 (DHINLKVAGQ…VFQQQTGGSF (80 aa)) enclose the Ubiquitin-like domain. G93 participates in a covalent cross-link: Glycyl lysine isopeptide (Gly-Lys) (interchain with K-? in acceptor proteins). The propeptide occupies 94–95 (SF).

It belongs to the ubiquitin family. SUMO subfamily. In terms of assembly, interacts with sae2 and ube2i. Covalently attached to a number of proteins, including top2. Polymeric chains can be formed through Lys-11 cross-linking. In terms of processing, cleavage of precursor form by a sentrin-specific protease is necessary for function.

Its subcellular location is the nucleus. Ubiquitin-like protein that can be covalently attached to proteins as a monomer or as a lysine-linked polymer. Covalent attachment via an isopeptide bond to its substrates requires prior activation by the E1 complex sae1-sae2 and linkage to the E2 enzyme ube2i, and can be promoted by an E3 ligase such as pias1-4. This post-translational modification on lysine residues of proteins plays a crucial role in a number of cellular processes such as nuclear transport, DNA replication and repair, mitosis and signal transduction. Polymeric sumo2 chains are also susceptible to polyubiquitination which functions as a signal for proteasomal degradation of modified proteins. This Xenopus laevis (African clawed frog) protein is Small ubiquitin-related modifier 2-A (sumo2-a).